A 440-amino-acid polypeptide reads, in one-letter code: Xylose isomerase (440 aa).

Residues histidine 101 and aspartate 104 contribute to the active site. Mg(2+) contacts are provided by glutamate 232, glutamate 268, histidine 271, aspartate 296, aspartate 307, aspartate 309, and aspartate 339.

The protein belongs to the xylose isomerase family. Homotetramer. Requires Mg(2+) as cofactor.

It is found in the cytoplasm. The enzyme catalyses alpha-D-xylose = alpha-D-xylulofuranose. The polypeptide is Xylose isomerase (Cronobacter sakazakii (strain ATCC BAA-894) (Enterobacter sakazakii)).